Consider the following 162-residue polypeptide: Small ribosomal subunit protein uS13 (162 aa).

The tract at residues 142–162 (RGQRTKSTGRRGSTVGVSRKK) is disordered.

It belongs to the universal ribosomal protein uS13 family. In terms of assembly, part of the 30S ribosomal subunit. Forms a loose heterodimer with protein S19. Forms two bridges to the 50S subunit in the 70S ribosome.

Located at the top of the head of the 30S subunit, it contacts several helices of the 16S rRNA. In the 70S ribosome it contacts the 23S rRNA (bridge B1a) and protein L5 of the 50S subunit (bridge B1b), connecting the 2 subunits; these bridges are implicated in subunit movement. This Methanosarcina acetivorans (strain ATCC 35395 / DSM 2834 / JCM 12185 / C2A) protein is Small ribosomal subunit protein uS13.